We begin with the raw amino-acid sequence, 107 residues long: Guanylin (107 aa).

The N-terminal stretch at methionine 1–alanine 20 is a signal peptide. The propeptide occupies valine 21–aspartate 92. 3 cysteine pairs are disulfide-bonded: cysteine 61/cysteine 74, cysteine 96/cysteine 104, and cysteine 99/cysteine 107.

This sequence belongs to the guanylin family.

Its subcellular location is the secreted. Its function is as follows. Endogenous activator of intestinal guanylate cyclase. It stimulates this enzyme through the same receptor binding region as the heat-stable enterotoxins. This is Guanylin (GUCA2A) from Cavia porcellus (Guinea pig).